The sequence spans 257 residues: Phosphonates import ATP-binding protein PhnC 1 (257 aa).

The ABC transporter domain maps to 2-246; that stretch reads LKITNLTKRY…EMDTIYAGVP (245 aa). Residue 35 to 42 participates in ATP binding; that stretch reads GSSGAGKS.

It belongs to the ABC transporter superfamily. Phosphonates importer (TC 3.A.1.9.1) family. In terms of assembly, the complex is composed of two ATP-binding proteins (PhnC), two transmembrane proteins (PhnE) and a solute-binding protein (PhnD).

The protein localises to the cell inner membrane. It catalyses the reaction phosphonate(out) + ATP + H2O = phosphonate(in) + ADP + phosphate + H(+). Its function is as follows. Part of the ABC transporter complex PhnCDE involved in phosphonates import. Responsible for energy coupling to the transport system. This chain is Phosphonates import ATP-binding protein PhnC 1, found in Ruegeria sp. (strain TM1040) (Silicibacter sp.).